The following is a 192-amino-acid chain: Anthranilate synthase component 2 (192 aa).

In terms of domain architecture, Glutamine amidotransferase type-1 spans 1–192 (MIVLVNNRDS…KNFVEMSRNG (192 aa)). 50-52 (GPG) is an L-glutamine binding site. C78 functions as the Nucleophile; for GATase activity in the catalytic mechanism. L-glutamine-binding positions include Q82 and 127–128 (SL). Residues H165 and E167 each act as for GATase activity in the active site.

In terms of assembly, heterotetramer consisting of two non-identical subunits: a beta subunit (TrpG) and a large alpha subunit (TrpE).

The catalysed reaction is chorismate + L-glutamine = anthranilate + pyruvate + L-glutamate + H(+). It functions in the pathway amino-acid biosynthesis; L-tryptophan biosynthesis; L-tryptophan from chorismate: step 1/5. Its function is as follows. Part of a heterotetrameric complex that catalyzes the two-step biosynthesis of anthranilate, an intermediate in the biosynthesis of L-tryptophan. In the first step, the glutamine-binding beta subunit (TrpG) of anthranilate synthase (AS) provides the glutamine amidotransferase activity which generates ammonia as a substrate that, along with chorismate, is used in the second step, catalyzed by the large alpha subunit of AS (TrpE) to produce anthranilate. In the absence of TrpG, TrpE can synthesize anthranilate directly from chorismate and high concentrations of ammonia. This Thermococcus kodakarensis (strain ATCC BAA-918 / JCM 12380 / KOD1) (Pyrococcus kodakaraensis (strain KOD1)) protein is Anthranilate synthase component 2 (trpG).